The sequence spans 317 residues: MSSLGGGSQDAGGSSSSSNTNSSSGSGQKAGGTDKSTAVAATTAPTSVADDAPPPERRNKSGIISEPLNKSLRRSRPLSHYSSFGSSGGGGSMMGVESADKAAAAAASLLANGHDLAAAMAVDKSNPTSKHKSGAVASLLSKAERATELAAEGQLTLQQFAQSTEMLKRVVQEHLPLMSEAGAGLPDMEAVAGAEALNGQSDFPYLGAFPINPGLFIMTPAGVFLAESALHMAGLAEYPMQGELASAISSGKKKRKRCGMCAPCRRRINCEQCSSCRNRKTGHQICKFRKCEELKKKPSAALEKVMLPSGAAFRWFQ.

The segment covering 1 to 10 (MSSLGGGSQD) has biased composition (gly residues). The disordered stretch occupies residues 1–92 (MSSLGGGSQD…SFGSSGGGGS (92 aa)). 2 stretches are compositionally biased toward low complexity: residues 11–27 (AGGSSSSSNTNSSSGSG) and 36–51 (STAVAATTAPTSVADD). Residues 251-292 (GKKKRKRCGMCAPCRRRINCEQCSSCRNRKTGHQICKFRKCE) form a CXXC-type zinc finger. The short motif at 252–257 (KKKRKR) is the Nuclear localization signal element. Residues Cys-258, Cys-261, Cys-264, Cys-270, Cys-273, Cys-276, Cys-286, and Cys-291 each contribute to the Zn(2+) site.

Interacts with DVL1. Interacts with RBPJ.

Its subcellular location is the nucleus. The protein resides in the cytoplasm. Its function is as follows. May indirectly participate in activation of the NF-kappa-B and MAPK pathways. Acts as a mediator of BMP4-mediated modulation of canonical Wnt signaling activity in neural stem cells. Required for DNA damage-induced ATM phosphorylation, p53 activation and cell cycle arrest. Involved in myelopoiesis. Binds to the oxygen responsive element of COX4I2 and represses its transcription under hypoxia conditions (4% oxygen), as well as normoxia conditions (20% oxygen). May repress COX4I2 transactivation induced by CHCHD2 and RBPJ. Binds preferentially to DNA containing cytidine-phosphate-guanosine (CpG) dinucleotides over CpH (H=A, T, and C), hemimethylated-CpG and hemimethylated-hydroxymethyl-CpG. This chain is CXXC-type zinc finger protein 5 (Cxxc5), found in Mus musculus (Mouse).